The primary structure comprises 218 residues: Hypoxanthine-guanine phosphoribosyltransferase (218 aa).

Residue Ala2 is modified to N-acetylalanine. A GMP-binding site is contributed by Lys69. The residue at position 103 (Lys103) is an N6-acetyllysine. Lys115 is covalently cross-linked (Glycyl lysine isopeptide (Lys-Gly) (interchain with G-Cter in SUMO1); alternate). Lys115 participates in a covalent cross-link: Glycyl lysine isopeptide (Lys-Gly) (interchain with G-Cter in SUMO2); alternate. GMP-binding positions include 134–142 (EDIIDTGKT), Lys166, 186–188 (KFV), and Asp194. The active-site Proton acceptor is the Asp138. Thr142 carries the post-translational modification Phosphothreonine. Asp194 is a binding site for Mg(2+).

The protein belongs to the purine/pyrimidine phosphoribosyltransferase family. Homotetramer. It depends on Mg(2+) as a cofactor.

The protein resides in the cytoplasm. It catalyses the reaction IMP + diphosphate = hypoxanthine + 5-phospho-alpha-D-ribose 1-diphosphate. The enzyme catalyses GMP + diphosphate = guanine + 5-phospho-alpha-D-ribose 1-diphosphate. Its pathway is purine metabolism; IMP biosynthesis via salvage pathway; IMP from hypoxanthine: step 1/1. Its function is as follows. Converts guanine to guanosine monophosphate, and hypoxanthine to inosine monophosphate. Transfers the 5-phosphoribosyl group from 5-phosphoribosylpyrophosphate onto the purine. Plays a central role in the generation of purine nucleotides through the purine salvage pathway. The protein is Hypoxanthine-guanine phosphoribosyltransferase (HPRT1) of Pan troglodytes (Chimpanzee).